A 525-amino-acid chain; its full sequence is Matrix extracellular phosphoglycoprotein (525 aa).

The signal sequence occupies residues 1–17 (MRVFCVGLLLFSVTWAA). Disordered regions lie at residues 24-95 (TEKT…NRQR), 187-216 (AKAH…THRI), and 237-525 (EGSG…SDGD). Basic and acidic residues-rich tracts occupy residues 25–46 (EKTK…DNIG) and 64–73 (IVQERKKDLS). Polar residues-rich tracts occupy residues 75–95 (SEAS…NRQR) and 200–210 (DSQAQKSPVKS). A dentonin region spans residues 242–264 (TDLQERGDNDISPFSGDGQPFKD). The Cell attachment site signature appears at 247–249 (RGD). Serine 256 is a glycosylation site (O-linked (Xyl...) (chondroitin sulfate) serine). Basic and acidic residues-rich tracts occupy residues 292 to 312 (ESTH…REEN) and 319 to 328 (TRDETAKEAD). Asparagine 477 and asparagine 478 each carry an N-linked (GlcNAc...) asparagine glycan. The segment at 507–525 (RDDSSESSDSGSSSESDGD) is ASARM motif; interaction with PHEX. Residues 513–525 (SSDSGSSSESDGD) are compositionally biased toward low complexity.

The protein belongs to the PF07175/osteoregulin family. In terms of assembly, interacts (via the ASARM motif) with PHEX; the interaction is zinc-dependent. Phosphorylated on serine residues in the ASARM motif (in vitro) by FAM20C; the phosphorylation is important for the inhibition of bone mineralization. Post-translationally, cleaved by CTSB/cathepsin B; the cleavage is blocked by metalloprotease PHEX. As to expression, detected in urine (at protein level). Expressed by osteoblasts. Expressed by stem cells in dental pulp. Expressed by mesenchymal cells in dental papilla and dental pulp. Expressed in teeth, specifically in decidious dentin. Expressed in ondotoblasts. Expressed in salivary glands. Secreted from oncogenic hypophosphatemic tumors.

Its subcellular location is the secreted. The protein localises to the extracellular space. It is found in the extracellular matrix. Functionally, promotes renal phosphate excretion and inhibits intestinal phosphate absorption. Promotes bone mineralization by osteoblasts and cartilage mineralization by chondrocytes. Regulates the mineralization of the extracellular matrix of the craniofacial complex, such as teeth, bone and cartilage. Promotes dental pulp stem cell proliferation and differentiation. In Homo sapiens (Human), this protein is Matrix extracellular phosphoglycoprotein (MEPE).